We begin with the raw amino-acid sequence, 111 residues long: uncharacterized protein (111 aa).

The chain crosses the membrane as a helical span at residues 18–41; the sequence is FFYFFFISFYTLWIVFFLLHLSFF.

The protein localises to the membrane. This is an uncharacterized protein from Saccharomyces cerevisiae (strain ATCC 204508 / S288c) (Baker's yeast).